Consider the following 361-residue polypeptide: Ribosomal RNA large subunit methyltransferase M (361 aa).

S-adenosyl-L-methionine-binding positions include Ser193, 226–229 (CPGG), Asp245, Asp265, and Asp283. The Proton acceptor role is filled by Lys312.

It belongs to the class I-like SAM-binding methyltransferase superfamily. RNA methyltransferase RlmE family. RlmM subfamily. Monomer.

It is found in the cytoplasm. It catalyses the reaction cytidine(2498) in 23S rRNA + S-adenosyl-L-methionine = 2'-O-methylcytidine(2498) in 23S rRNA + S-adenosyl-L-homocysteine + H(+). Its function is as follows. Catalyzes the 2'-O-methylation at nucleotide C2498 in 23S rRNA. The sequence is that of Ribosomal RNA large subunit methyltransferase M from Histophilus somni (strain 129Pt) (Haemophilus somnus).